A 231-amino-acid chain; its full sequence is Ion-translocating oxidoreductase complex subunit E (231 aa).

The next 6 helical transmembrane spans lie at 18–38 (ALVQ…ATNA), 39–59 (LGLG…ISTL), 63–83 (TPAE…VSAV), 86–106 (LINA…PLIV), 125–145 (ALSA…MFVL), and 182–202 (PFLL…MLAG).

This sequence belongs to the NqrDE/RnfAE family. The complex is composed of six subunits: RsxA, RsxB, RsxC, RsxD, RsxE and RsxG.

It is found in the cell inner membrane. Part of a membrane-bound complex that couples electron transfer with translocation of ions across the membrane. Required to maintain the reduced state of SoxR. The protein is Ion-translocating oxidoreductase complex subunit E of Escherichia coli O1:K1 / APEC.